Consider the following 605-residue polypeptide: Aspartate--tRNA(Asp/Asn) ligase (605 aa).

Glutamate 186 contributes to the L-aspartate binding site. The interval 210-213 (QQFK) is aspartate. Arginine 232 and histidine 460 together coordinate L-aspartate. 232-234 (RDE) provides a ligand contact to ATP. Glutamate 494 provides a ligand contact to ATP. Position 501 (arginine 501) interacts with L-aspartate. Residue 546 to 549 (GLDR) coordinates ATP.

The protein belongs to the class-II aminoacyl-tRNA synthetase family. Type 1 subfamily. As to quaternary structure, homodimer.

The protein resides in the cytoplasm. The catalysed reaction is tRNA(Asx) + L-aspartate + ATP = L-aspartyl-tRNA(Asx) + AMP + diphosphate. Aspartyl-tRNA synthetase with relaxed tRNA specificity since it is able to aspartylate not only its cognate tRNA(Asp) but also tRNA(Asn). Reaction proceeds in two steps: L-aspartate is first activated by ATP to form Asp-AMP and then transferred to the acceptor end of tRNA(Asp/Asn). This chain is Aspartate--tRNA(Asp/Asn) ligase, found in Chlorobium chlorochromatii (strain CaD3).